Here is a 359-residue protein sequence, read N- to C-terminus: Aminoacyl tRNA synthase complex-interacting multifunctional protein 1 (359 aa).

The tract at residues Ala-52–Lys-92 is required for fibroblast proliferation. Residues Lys-100 to Val-241 are interaction with HSP90B1. Residues Ser-149 to Gly-163 are required for endothelial cell death. The segment at Ser-156–Pro-196 is disordered. Residues Ile-157 to Leu-185 show a composition bias toward basic and acidic residues. The segment at Gly-163 to Gly-239 is required for endothelial cell migration. Lys-184 participates in a covalent cross-link: Glycyl lysine isopeptide (Lys-Gly) (interchain with G-Cter in SUMO1). Residue Ser-187 is modified to Phosphoserine. Residues Asp-198–Thr-299 enclose the tRNA-binding domain. Lys-316 carries the N6-succinyllysine modification.

Homodimer. Part of the multisynthetase complex (MSC), a multisubunit complex that groups tRNA ligases for Arg (RARS1), Asp (DARS1), Gln (QARS1), Ile (IARS1), Leu (LARS1), Lys (KARS1), Met (MARS1) the bifunctional ligase for Glu and Pro (EPRS1) and the auxiliary subunits AIMP1/p43, AIMP2/p38 and EEF1E1/p18. Interacts (via N-terminus) with RARS1 (via N-terminus). Part of a complex composed of RARS1, QARS1 and AIMP1. Interacts (via C-terminus) with SMURF2. Interacts (via N-terminus) with HSP90B1/gp96 (via C-terminus). Interacts with PSMA7. Interacts with TARS3. Post-translationally, cleaved by caspase-7 in response to apoptosis to produce EMAP-II.

It localises to the nucleus. Its subcellular location is the cytoplasm. It is found in the cytosol. The protein resides in the secreted. The protein localises to the endoplasmic reticulum. It localises to the golgi apparatus. Functionally, non-catalytic component of the multisynthase complex. Stimulates the catalytic activity of cytoplasmic arginyl-tRNA synthase. Binds tRNA. Possesses inflammatory cytokine activity. Negatively regulates TGF-beta signaling through stabilization of SMURF2 by binding to SMURF2 and inhibiting its SMAD7-mediated degradation. Involved in glucose homeostasis through induction of glucagon secretion at low glucose levels. Promotes dermal fibroblast proliferation and wound repair. Regulates KDELR1-mediated retention of HSP90B1/gp96 in the endoplasmic reticulum. Plays a role in angiogenesis by inducing endothelial cell migration at low concentrations and endothelian cell apoptosis at high concentrations. Induces maturation of dendritic cells and monocyte cell adhesion. This chain is Aminoacyl tRNA synthase complex-interacting multifunctional protein 1 (AIMP1), found in Cricetulus griseus (Chinese hamster).